The sequence spans 868 residues: Facilitated trehalose transporter Tret1 (868 aa).

Disordered regions lie at residues 1 to 213 and 257 to 314; these read MSGR…QKAT and KESS…LIHR. Residues 1-403 lie on the Cytoplasmic side of the membrane; the sequence is MSGRDNRGAG…VYRPTTNPIY (403 aa). The segment covering 25–43 has biased composition (basic and acidic residues); the sequence is KLKEKLTRAGDDQGYHRVE. Composition is skewed to low complexity over residues 44 to 57, 79 to 91, and 117 to 126; these read SNLS…SLDT, PQQQ…QQLR, and PFQQQQQRTP. Composition is skewed to basic and acidic residues over residues 146–155 and 257–290; these read EIREHRDRQQ and KESS…KLDK. Phosphoserine occurs at positions 259, 260, 261, 331, and 333. The interval 335 to 367 is disordered; the sequence is EDFHTSRQHFQQQRSISTDSRKSRRPYEMDEMG. Residues 342–352 show a composition bias toward polar residues; that stretch reads QHFQQQRSIST. Residues 353–367 show a composition bias toward basic and acidic residues; the sequence is DSRKSRRPYEMDEMG. The helical transmembrane segment at 404–424 threads the bilayer; that stretch reads IWTQVLAALSVSLGSLVVGFV. Over 425–451 the chain is Extracellular; it reads SAYTSPALVSMTNRNMTSFEVTPQAAS. N-linked (GlcNAc...) asparagine glycosylation is present at N439. The helical transmembrane segment at 452-472 threads the bilayer; that stretch reads WVGGIMPLAGLAGGIAGGPFI. At 473–484 the chain is on the cytoplasmic side; that stretch reads EYLGRRNTILAT. A helical transmembrane segment spans residues 485-505; sequence AIPFIVSSLLIACAVNVAMVL. The Extracellular segment spans residues 506–508; sequence AGR. Residues 509-529 traverse the membrane as a helical segment; the sequence is FLAGFCVGIASLSLPVYLGET. The Cytoplasmic portion of the chain corresponds to 530 to 535; it reads VQPEVR. Residues 536–556 traverse the membrane as a helical segment; sequence GTLGLLPTAFGNIGILLCFVA. Residues 557 to 563 are Extracellular-facing; that stretch reads GTYMDWS. A helical membrane pass occupies residues 564–584; sequence MLAFLGAALPVPFLILMFLIP. Residues 585-653 are Cytoplasmic-facing; that stretch reads ETPRWFVSRG…NLKPLSISLG (69 aa). Residues 654–674 traverse the membrane as a helical segment; sequence LMFFQQLSGINAVIFYTVSIF. At 675-684 the chain is on the extracellular side; sequence KDAGSTIDGN. The helical transmembrane segment at 685 to 705 threads the bilayer; it reads LCTIIVGIVNFMATFIATLLI. The Cytoplasmic portion of the chain corresponds to 706 to 711; the sequence is DRAGRK. Residues 712 to 732 traverse the membrane as a helical segment; that stretch reads ILLYVSNIAMIITLFVLGGFF. Residues 733–751 lie on the Extracellular side of the membrane; it reads YCKSHGQDVSQLGWLPLSC. The chain crosses the membrane as a helical span at residues 752-772; it reads FVIYILGFSLGFGPIPWLMMG. The Cytoplasmic segment spans residues 773 to 778; the sequence is EILPSK. The helical transmembrane segment at 779–799 threads the bilayer; it reads IRGSAASVATAFNWSCTFVVT. At 800 to 812 the chain is on the extracellular side; sequence KTFQDMIDFMGAH. The chain crosses the membrane as a helical span at residues 813 to 833; sequence GAFWLFGSICFIGLFFVILYV. Topologically, residues 834–868 are cytoplasmic; that stretch reads PETQGKTLEDIERKMMGRVRRMSSVANMKPLAFNM. Phosphoserine occurs at positions 856 and 857.

Belongs to the major facilitator superfamily. Sugar transporter (TC 2.A.1.1) family. Trehalose transporter subfamily.

The protein resides in the cell membrane. In terms of biological role, low-capacity facilitative transporter for trehalose. Does not transport maltose, sucrose or lactose. Mediates the bidirectional transfer of trehalose. Responsible for the transport of trehalose synthesized in the fat body and the incorporation of trehalose into other tissues that require a carbon source, thereby regulating trehalose levels in the hemolymph. The chain is Facilitated trehalose transporter Tret1 from Drosophila pseudoobscura pseudoobscura (Fruit fly).